We begin with the raw amino-acid sequence, 405 residues long: Dihydrolipoyllysine-residue succinyltransferase component of 2-oxoglutarate dehydrogenase complex (405 aa).

The Lipoyl-binding domain occupies 3 to 78 (SVDILVPDLP…TSRQILGRLR (76 aa)). Lys-44 bears the N6-lipoyllysine mark. Positions 75-111 (GRLREGNSAGKETSAKSEEKASTPAQRQQASLEEQNN) are disordered. Residues 97-111 (TPAQRQQASLEEQNN) show a composition bias toward polar residues. One can recognise a Peripheral subunit-binding (PSBD) domain in the interval 113–150 (ALSPAIRRLLAEHNLDASAIKGTGVGGRLTREDVEKHL). Lys-148 carries the post-translational modification N6-acetyllysine. Residues 153-173 (APAKESAPAAAAPAAQPALAA) show a composition bias toward low complexity. The interval 153-178 (APAKESAPAAAAPAAQPALAARSEKR) is disordered. Residues His-376 and Asp-380 contribute to the active site.

Belongs to the 2-oxoacid dehydrogenase family. As to quaternary structure, forms a 24-polypeptide structural core with octahedral symmetry. Part of the 2-oxoglutarate dehydrogenase (OGDH) complex composed of E1 (2-oxoglutarate dehydrogenase), E2 (dihydrolipoamide succinyltransferase) and E3 (dihydrolipoamide dehydrogenase); the complex contains multiple copies of the three enzymatic components (E1, E2 and E3). Interacts with SucA (via N-terminus), the E1 component of OGDH complex. It depends on (R)-lipoate as a cofactor.

It carries out the reaction N(6)-[(R)-dihydrolipoyl]-L-lysyl-[protein] + succinyl-CoA = N(6)-[(R)-S(8)-succinyldihydrolipoyl]-L-lysyl-[protein] + CoA. Its pathway is amino-acid degradation; L-lysine degradation via saccharopine pathway; glutaryl-CoA from L-lysine: step 6/6. In terms of biological role, E2 component of the 2-oxoglutarate dehydrogenase (OGDH) complex which catalyzes the second step in the conversion of 2-oxoglutarate to succinyl-CoA and CO(2). The sequence is that of Dihydrolipoyllysine-residue succinyltransferase component of 2-oxoglutarate dehydrogenase complex (sucB) from Escherichia coli O157:H7.